The chain runs to 657 residues: MSDNQDILAVIALTLPDGSVKTFPIGTTGNDVALSIGRKLAQDALALRVNGVAIDLSTPLTADAAIEIITFSSPAGQDIFWHSSSHLMAQAIEELYPGSKFGAGPSIEQGFYYDVASTHRFREEDLRKIEERMLEISKRDIQIRREEMSRTDAIEFFKTVRNDPYKVEILEDTLKEVERVSLYHQDGFTDLCIGPHIPSTSKVKAVLLSNISSSYWRGDSARENMQRIYGITFPSEKLLKEHVARLEEAKRRDHRKLGAELELFMLSPEVGSGLPIWLPKGAIIRNELETFLKEEQRKRGYLPVYTPHIGNIELYKRSGHYPYYSDSQFPPLTYHDEEGKQEQYLLKPMNCPHHHLIYSSKMRSYRDLPLRLTEFGTVYRHEQSGELNGLVRARGFTQDDSHIYCRPDQLVDEICSAIELTQFVFGTLGFSEVQTRLSMHDPENQAKYGGTAEVWEQAEKDVQEAADRMGIDYFIGVGEASFYGPKIDFIVRDALGRKWQLGTVQVDYVMPERFDLTYTGSDGQKHRPVVIHRAPFGSMERFIGVLIEHTAGNFPLWLAPVQAVVLPIAEDVLDYAKSVHQALLAAGIRAELDTRSEKIGKKIRDAEVSKIPCMIVIGQKEQESGEVSLRRHRIGDEGRFSVSGLIEKLKTEITGKS.

In terms of domain architecture, TGS spans 7-70 (ILAVIALTLP…TADAAIEIIT (64 aa)). Positions 253-555 (DHRKLGAELE…LIEHTAGNFP (303 aa)) are catalytic. Residues cysteine 351, histidine 402, and histidine 532 each coordinate Zn(2+).

This sequence belongs to the class-II aminoacyl-tRNA synthetase family. Homodimer. The cofactor is Zn(2+).

It localises to the cytoplasm. The catalysed reaction is tRNA(Thr) + L-threonine + ATP = L-threonyl-tRNA(Thr) + AMP + diphosphate + H(+). Functionally, catalyzes the attachment of threonine to tRNA(Thr) in a two-step reaction: L-threonine is first activated by ATP to form Thr-AMP and then transferred to the acceptor end of tRNA(Thr). Also edits incorrectly charged L-seryl-tRNA(Thr). This Pelodictyon phaeoclathratiforme (strain DSM 5477 / BU-1) protein is Threonine--tRNA ligase.